We begin with the raw amino-acid sequence, 323 residues long: CYFIP-related Rac1 interactor A (323 aa).

This sequence belongs to the CYRI family.

Its subcellular location is the membrane. Its function is as follows. May negatively regulate RAC1 signaling and RAC1-driven cytoskeletal remodeling. May regulate chemotaxis, cell migration and epithelial polarization by controlling the polarity, plasticity, duration and extent of protrusions. This is CYFIP-related Rac1 interactor A (CYRIA) from Gallus gallus (Chicken).